A 365-amino-acid polypeptide reads, in one-letter code: Ubiquitin carboxyl-terminal hydrolase 4 (365 aa).

The N-myristoyl glycine moiety is linked to residue G2. The USP domain occupies F23–L362. C32 functions as the Nucleophile in the catalytic mechanism. The Bipartite nuclear localization signal motif lies at K81 to K98. Residue H310 is the Proton acceptor of the active site.

The protein belongs to the peptidase C19 family. In terms of tissue distribution, constitutively and ubiquitously expressed.

The protein resides in the nucleus. It carries out the reaction Thiol-dependent hydrolysis of ester, thioester, amide, peptide and isopeptide bonds formed by the C-terminal Gly of ubiquitin (a 76-residue protein attached to proteins as an intracellular targeting signal).. Its function is as follows. Recognizes and hydrolyzes the peptide bond at the C-terminal Gly of ubiquitin. Involved in the processing of poly-ubiquitin precursors as well as that of ubiquitinated proteins. Required for the correct development of pollen. The sequence is that of Ubiquitin carboxyl-terminal hydrolase 4 (UBP4) from Arabidopsis thaliana (Mouse-ear cress).